The chain runs to 480 residues: Methylenetetrahydrofolate--tRNA-(uracil-5-)-methyltransferase TrmFO (480 aa).

15 to 20 serves as a coordination point for FAD; the sequence is GGGLAG.

The protein belongs to the MnmG family. TrmFO subfamily. It depends on FAD as a cofactor.

It is found in the cytoplasm. It carries out the reaction uridine(54) in tRNA + (6R)-5,10-methylene-5,6,7,8-tetrahydrofolate + NADH + H(+) = 5-methyluridine(54) in tRNA + (6S)-5,6,7,8-tetrahydrofolate + NAD(+). The enzyme catalyses uridine(54) in tRNA + (6R)-5,10-methylene-5,6,7,8-tetrahydrofolate + NADPH + H(+) = 5-methyluridine(54) in tRNA + (6S)-5,6,7,8-tetrahydrofolate + NADP(+). Its function is as follows. Catalyzes the folate-dependent formation of 5-methyl-uridine at position 54 (M-5-U54) in all tRNAs. The sequence is that of Methylenetetrahydrofolate--tRNA-(uracil-5-)-methyltransferase TrmFO from Sinorhizobium medicae (strain WSM419) (Ensifer medicae).